A 455-amino-acid chain; its full sequence is MKKLLTVMTMAVLTAGTLLLPAQSVTPAAHAVQISNSERELPFKAKHAYSTISQLSEAIGPRIAGTAAEKKSALLIASSMRKLKLDVKVQRFNIPDRLEGTLSSAGRDILLQAASGSAPTEEQGLTAPLYNAGLGYQKDFTADAKGKIALISRGDLTYYEKAKNAEAAGAKAVIIYNNKESLVPMTPNLSGNKVGIPVVGIKKEDGEALTQQKEATLKLKAFTNQTSQNIIGIKKPKNIKHPDIVYVTAHYDSVPFSPGANDNGSGTSVMLEMARVLKSVPSDKEIRFIAFGAEELGLLGSSHYVDHLSEKELKRSEVNFNLDMVGTSWEKASELYVNTLDGQSNYVWESSRTAAEKIGFDSLSLTQGGSSDHVPFHEAGIDSANFIWGDPETEEVEPWYHTPEDSIEHISKERLQQAGDLVTAAVYEAVKKEKKPKTIKKQMKAKASDIFEDIK.

Residues 1–31 (MKKLLTVMTMAVLTAGTLLLPAQSVTPAAHA) form the signal peptide. 5 residues coordinate Zn(2+): His250, Asp262, Glu295, Asp323, and His401.

It belongs to the peptidase M28 family. M28B subfamily. In terms of assembly, monomer. Zn(2+) serves as cofactor.

The protein resides in the secreted. The enzyme catalyses Release of N-terminal Arg and Lys from oligopeptides when P1' is not Pro. Also acts on arylamides of Arg and Lys.. It carries out the reaction Release of an N-terminal amino acid, preferentially leucine, but not glutamic or aspartic acids.. Functionally, catalyzes the hydrolysis of a range of N-terminal amino acids. In Bacillus subtilis (strain 168), this protein is Aminopeptidase YwaD (ywaD).